The chain runs to 416 residues: Tyrosine permease (416 aa).

The next 11 membrane-spanning stretches (helical) occupy residues 13–33 (GTML…PIAM), 34–54 (AGIW…MMLL), 86–106 (VVVG…YISG), 127–147 (LSVI…SLLV), 153–173 (VLII…IWHV), 192–212 (LPYI…HGNV), 231–251 (IFIG…VTMG), 260–280 (PIIA…GLFT), 286–306 (LILT…ATLG), 337–357 (VVCF…GLAF), and 389–409 (ILNL…LDVF).

The protein belongs to the amino acid/polyamine transporter 2 family. Mtr/TnaB/TyrP permease subfamily.

It localises to the cell inner membrane. This chain is Tyrosine permease (tutB), found in Enterobacter agglomerans (Erwinia herbicola).